The sequence spans 552 residues: MKKNRERFCNKEREFVYKFQVGRERLELRVPLRFPVEENASHLHGRLMLLHSLPCFIESDLKDALSRFIEEESLRDHDSDAEACLEAVKSGEVDLHQLASAWAKAYAETTLEHARPEEPDWDEDFADVYHDLIHSPASETLLNLEHNYFVSISELIGERDVELKKLRERQGIEMEKVMQELGKSLTDQDVNSLAAQHFESQQDLENKWSNELKQSTAIQKQEYQEWVIKLHQDLKNPNNSSLSEEIKVQPSQFRESADAAGRIYEEQRKLEESFTIHLGAQLKTMHNLRLLRADMLDFCKHKRTHGSGVKLHRLQTALSLYSTSLCGLVLLVDNRINSYSGIKRDFATVCQECTDFHFPRIEEQLEVVQQVALYARTQRKSKCKEARDSGNQNGGSDDKSKNAERNYLNILPGEFYITRHSNLSEIHVAFHLCVDDNVKSGNITARDPAIMGLRNILKVCCTHDITTISIPLLLVHDMSEEMTIPWCLRRAELVFKCVKGFMMEMASWDGGISRTVQFLVPQSISEEMFYQLSNMLPQIFRVSSTLTLTSKH.

The residue at position 79 (serine 79) is a Phosphoserine.

In terms of assembly, component of the FERRY complex composed of five subunits, TBCK, PPP1R21, FERRY3, CRYZL1 and GATD1 with a ratio of 1:2:1:2:4, respectively.

The protein localises to the cytoplasm. It is found in the early endosome. Functionally, component of the FERRY complex (Five-subunit Endosomal Rab5 and RNA/ribosome intermediary). The FERRY complex directly interacts with mRNAs and RAB5A, and functions as a RAB5A effector involved in the localization and the distribution of specific mRNAs most likely by mediating their endosomal transport. The complex recruits mRNAs and ribosomes to early endosomes through direct mRNA-interaction. Plays a role in mast cell degranulation. In Mus musculus (Mouse), this protein is FERRY endosomal RAB5 effector complex subunit 3.